A 145-amino-acid chain; its full sequence is Acidic phospholipase A2 1 (145 aa).

Residues 1–21 form the signal peptide; that stretch reads MYPAHLLVLLAVCVSLLGATA. Residues 22 to 27 constitute a propeptide that is removed on maturation; it reads IPPLPL. Cystine bridges form between cysteine 38/cysteine 98, cysteine 54/cysteine 144, cysteine 56/cysteine 72, cysteine 71/cysteine 125, cysteine 78/cysteine 118, cysteine 87/cysteine 111, and cysteine 105/cysteine 116. Residues tyrosine 55, glycine 57, and glycine 59 each coordinate Ca(2+). Histidine 75 is an active-site residue. Aspartate 76 contacts Ca(2+). Aspartate 119 is a catalytic residue.

This sequence belongs to the phospholipase A2 family. Group I subfamily. D49 sub-subfamily. In terms of assembly, monomer. The cofactor is Ca(2+). As to expression, expressed by the venom gland.

The protein resides in the secreted. The enzyme catalyses a 1,2-diacyl-sn-glycero-3-phosphocholine + H2O = a 1-acyl-sn-glycero-3-phosphocholine + a fatty acid + H(+). PLA2 catalyzes the calcium-dependent hydrolysis of the 2-acyl groups in 3-sn-phosphoglycerides. The protein is Acidic phospholipase A2 1 of Laticauda semifasciata (Black-banded sea krait).